We begin with the raw amino-acid sequence, 410 residues long: UPF0761 membrane protein Csal_1895 (410 aa).

Helical transmembrane passes span 43-63 (LFAV…IPSF), 99-119 (SLTL…MVTV), 139-159 (FLLY…GFLL), 180-200 (VAFL…FIYM), 212-232 (AVAG…AFSL), and 247-267 (FAAV…VLVG).

The protein belongs to the UPF0761 family.

Its subcellular location is the cell inner membrane. The sequence is that of UPF0761 membrane protein Csal_1895 from Chromohalobacter salexigens (strain ATCC BAA-138 / DSM 3043 / CIP 106854 / NCIMB 13768 / 1H11).